Here is a 48-residue protein sequence, read N- to C-terminus: 2-deoxy-glucose resistant protein 1, mitochondrial (48 aa).

The transit peptide at 1–28 (MQVGFVSQTNCRSFPACIVFLFQMSQRQ) directs the protein to the mitochondrion.

The protein localises to the mitochondrion. The sequence is that of 2-deoxy-glucose resistant protein 1, mitochondrial (DGR1) from Saccharomyces cerevisiae (strain ATCC 204508 / S288c) (Baker's yeast).